A 211-amino-acid chain; its full sequence is ATP phosphoribosyltransferase (211 aa).

This sequence belongs to the ATP phosphoribosyltransferase family. Short subfamily. Heteromultimer composed of HisG and HisZ subunits.

It localises to the cytoplasm. It carries out the reaction 1-(5-phospho-beta-D-ribosyl)-ATP + diphosphate = 5-phospho-alpha-D-ribose 1-diphosphate + ATP. It participates in amino-acid biosynthesis; L-histidine biosynthesis; L-histidine from 5-phospho-alpha-D-ribose 1-diphosphate: step 1/9. Functionally, catalyzes the condensation of ATP and 5-phosphoribose 1-diphosphate to form N'-(5'-phosphoribosyl)-ATP (PR-ATP). Has a crucial role in the pathway because the rate of histidine biosynthesis seems to be controlled primarily by regulation of HisG enzymatic activity. The chain is ATP phosphoribosyltransferase from Pseudomonas savastanoi pv. phaseolicola (strain 1448A / Race 6) (Pseudomonas syringae pv. phaseolicola (strain 1448A / Race 6)).